The sequence spans 1332 residues: DEMETER-like protein 2 (1332 aa).

Basic and acidic residues predominate over residues 1–23 (MEVEGEVREKEARVKGRQPETEV). Disordered stretches follow at residues 1 to 29 (MEVE…GLPQ), 137 to 242 (VSTS…TSEE), and 280 to 317 (VEGS…KKTD). The segment covering 137–153 (VSTSTQRTEPESPQITL) has biased composition (polar residues). Residues 223–236 (SKAGIKKSSIAATA) show a composition bias toward low complexity. Positions 301 to 312 (PKGRRGQRRSNG) are enriched in basic residues. The interval 497 to 595 (KVQLDPETSR…AYMDLAAEFP (99 aa)) is DEMETER. Residues 739 to 753 (HQQDPESTIQTQDQQ) are compositionally biased toward polar residues. Residues 739–810 (HQQDPESTIQ…GGRKRERTER (72 aa)) form a disordered region. Residues 763–777 (KNRKKPTTSKPKKKS) are compositionally biased toward basic residues. Positions 787-810 (KSVDWDSLRKEAESGGRKRERTER) are enriched in basic and acidic residues. [4Fe-4S] cluster is bound by residues cysteine 970, cysteine 977, cysteine 980, and cysteine 986.

This sequence belongs to the DNA glycosylase family. DEMETER subfamily. Requires [4Fe-4S] cluster as cofactor.

It localises to the nucleus. In terms of biological role, potential transcriptional activator that may act by nicking the target promoter. Catalyzes the release of 5-methylcytosine (5-meC) from DNA by a glycosylase/lyase mechanism. The chain is DEMETER-like protein 2 (DML2) from Arabidopsis thaliana (Mouse-ear cress).